We begin with the raw amino-acid sequence, 434 residues long: Tol-Pal system protein TolB (434 aa).

The N-terminal stretch at 1-21 is a signal peptide; it reads MIVRRALALAALALAASPALA. Residues 411–434 are disordered; the sequence is GDRQTPVTSGKTDLAAPAWGPLAP.

It belongs to the TolB family. As to quaternary structure, the Tol-Pal system is composed of five core proteins: the inner membrane proteins TolA, TolQ and TolR, the periplasmic protein TolB and the outer membrane protein Pal. They form a network linking the inner and outer membranes and the peptidoglycan layer.

It is found in the periplasm. Its function is as follows. Part of the Tol-Pal system, which plays a role in outer membrane invagination during cell division and is important for maintaining outer membrane integrity. The polypeptide is Tol-Pal system protein TolB (Anaeromyxobacter sp. (strain K)).